A 127-amino-acid chain; its full sequence is Large ribosomal subunit protein bL17 (127 aa).

Belongs to the bacterial ribosomal protein bL17 family. In terms of assembly, part of the 50S ribosomal subunit. Contacts protein L32.

This Haemophilus ducreyi (strain 35000HP / ATCC 700724) protein is Large ribosomal subunit protein bL17.